The chain runs to 108 residues: Protein RnfH (108 aa).

Positions A86–A108 are disordered.

It belongs to the UPF0125 (RnfH) family.

The sequence is that of Protein RnfH from Pseudoalteromonas atlantica (strain T6c / ATCC BAA-1087).